The chain runs to 466 residues: 3-isopropylmalate dehydratase large subunit (466 aa).

[4Fe-4S] cluster contacts are provided by C347, C407, and C410.

This sequence belongs to the aconitase/IPM isomerase family. LeuC type 1 subfamily. In terms of assembly, heterodimer of LeuC and LeuD. [4Fe-4S] cluster is required as a cofactor.

The catalysed reaction is (2R,3S)-3-isopropylmalate = (2S)-2-isopropylmalate. It functions in the pathway amino-acid biosynthesis; L-leucine biosynthesis; L-leucine from 3-methyl-2-oxobutanoate: step 2/4. Functionally, catalyzes the isomerization between 2-isopropylmalate and 3-isopropylmalate, via the formation of 2-isopropylmaleate. The protein is 3-isopropylmalate dehydratase large subunit of Escherichia coli O139:H28 (strain E24377A / ETEC).